A 481-amino-acid chain; its full sequence is Polygalacturonase QRT3 (481 aa).

Positions 1–27 (MELRKSQVAMPVFLAIMSLMVSQVVFA) are cleaved as a signal peptide. PbH1 repeat units lie at residues 203–226 (SLRTSIDNCYITRFGDTNGILVKS), 261–282 (GNDNAVTDTVIFSARIGVMVSG), and 356–377 (IRGVSIVDNMFSGSGHGVQIVQ). Asn-415 and Asn-455 each carry an N-linked (GlcNAc...) asparagine glycan.

Belongs to the glycosyl hydrolase 28 family. Expressed in the tapetum cells in the anthers and in the ovules of open flowers.

It localises to the secreted. Its subcellular location is the cell wall. It carries out the reaction (1,4-alpha-D-galacturonosyl)n+m + H2O = (1,4-alpha-D-galacturonosyl)n + (1,4-alpha-D-galacturonosyl)m.. In terms of biological role, polygalacturonase required for degrading the pollen mother cell wall during microspore development. The polypeptide is Polygalacturonase QRT3 (QRT3) (Arabidopsis thaliana (Mouse-ear cress)).